A 167-amino-acid polypeptide reads, in one-letter code: Photosystem I assembly protein Ycf3 (167 aa).

3 TPR repeats span residues 35–68 (AFAY…EVDA), 72–105 (SYIL…NPSL), and 120–153 (GEQA…APTN).

The protein belongs to the Ycf3 family.

The protein resides in the plastid. The protein localises to the chloroplast thylakoid membrane. In terms of biological role, essential for the assembly of the photosystem I (PSI) complex. May act as a chaperone-like factor to guide the assembly of the PSI subunits. This Stigeoclonium helveticum (Green alga) protein is Photosystem I assembly protein Ycf3.